The sequence spans 108 residues: Evasin P1127 (108 aa).

Positions 1 to 28 (MEAKTFAFLEIAMFIALGIQTFVAVTDA) are cleaved as a signal peptide. Intrachain disulfides connect cysteine 41-cysteine 63, cysteine 45-cysteine 65, and cysteine 56-cysteine 76. Residue asparagine 44 is glycosylated (N-linked (GlcNAc...) asparagine). N-linked (GlcNAc...) asparagine glycosylation occurs at asparagine 89.

It localises to the secreted. Salivary chemokine-binding protein which binds to host chemokines CXCL1, CXCL2, CXCL3, CXCL5 and CXCL8. This Ixodes ricinus (Common tick) protein is Evasin P1127.